Reading from the N-terminus, the 428-residue chain is Tyrosine--tRNA ligase (428 aa).

Tyrosine 41 is an L-tyrosine binding site. Residues 46-55 (PTADSLHLGH) carry the 'HIGH' region motif. The L-tyrosine site is built by tyrosine 179 and glutamine 183. Positions 239-243 (KFGKT) match the 'KMSKS' region motif. Lysine 242 is an ATP binding site. Residues 361 to 418 (ADLMQALVDSELQPSRGQARKTIASNAITINGEKQSDPEYTFSDSDRLFGRYTLLRRG) form the S4 RNA-binding domain.

This sequence belongs to the class-I aminoacyl-tRNA synthetase family. TyrS type 1 subfamily. Homodimer.

It is found in the cytoplasm. The catalysed reaction is tRNA(Tyr) + L-tyrosine + ATP = L-tyrosyl-tRNA(Tyr) + AMP + diphosphate + H(+). Catalyzes the attachment of tyrosine to tRNA(Tyr) in a two-step reaction: tyrosine is first activated by ATP to form Tyr-AMP and then transferred to the acceptor end of tRNA(Tyr). This is Tyrosine--tRNA ligase from Cronobacter sakazakii (strain ATCC BAA-894) (Enterobacter sakazakii).